We begin with the raw amino-acid sequence, 529 residues long: Bifunctional purine biosynthesis protein PurH (529 aa).

The MGS-like domain maps to 1–148; that stretch reads MQQRRPVRRA…KNHRDVAIVV (148 aa). Position 287 is an N6-acetyllysine (Lys287).

This sequence belongs to the PurH family.

It carries out the reaction (6R)-10-formyltetrahydrofolate + 5-amino-1-(5-phospho-beta-D-ribosyl)imidazole-4-carboxamide = 5-formamido-1-(5-phospho-D-ribosyl)imidazole-4-carboxamide + (6S)-5,6,7,8-tetrahydrofolate. The catalysed reaction is IMP + H2O = 5-formamido-1-(5-phospho-D-ribosyl)imidazole-4-carboxamide. It participates in purine metabolism; IMP biosynthesis via de novo pathway; 5-formamido-1-(5-phospho-D-ribosyl)imidazole-4-carboxamide from 5-amino-1-(5-phospho-D-ribosyl)imidazole-4-carboxamide (10-formyl THF route): step 1/1. The protein operates within purine metabolism; IMP biosynthesis via de novo pathway; IMP from 5-formamido-1-(5-phospho-D-ribosyl)imidazole-4-carboxamide: step 1/1. This Escherichia coli O6:K15:H31 (strain 536 / UPEC) protein is Bifunctional purine biosynthesis protein PurH.